A 284-amino-acid polypeptide reads, in one-letter code: Serine protease 57 (284 aa).

The N-terminal stretch at 1–35 (MPSSTAMVPGTRGGWHCLVLTTAAALTQLMWLPGC) is a signal peptide. A Peptidase S1 domain is found at 40–269 (IVGGHEVTPH…FVTWIWDVVR (230 aa)). An intrachain disulfide couples Cys65 to Cys81. Catalysis depends on charge relay system residues His80 and Asp128. The N-linked (GlcNAc...) asparagine glycan is linked to Asn135. 3 cysteine pairs are disulfide-bonded: Cys163-Cys230, Cys194-Cys208, and Cys220-Cys245. The Charge relay system role is filled by Ser224.

Belongs to the peptidase S1 family. Post-translationally, after cleavage of the signal peptide, the N-terminus is probably further processed by CTSC. Processing by CTSC is probably required for accumulation in cytoplasmic granules; in the absence of CTSC the protein does not accumulate. N-glycosylated.

The protein localises to the cytoplasmic granule lumen. It localises to the secreted. In terms of biological role, serine protease that cleaves preferentially after Arg residues. Can also cleave after citrulline (deimidated arginine) and methylarginine residues. This chain is Serine protease 57 (Prss57), found in Mus musculus (Mouse).